The sequence spans 242 residues: Protein HTATIP2 (242 aa).

N-acetylalanine is present on alanine 2. A required for interaction with elongation factor EEF1A1 region spans residues 2–25 (AETEALSKLREDFRMQNKSVFILG). NADPH-binding residues include serine 27, glycine 28, glutamate 29, threonine 30, arginine 52, arginine 53, leucine 92, glycine 93, tyrosine 143, lysine 147, leucine 170, and arginine 178. The active-site Proton acceptor is the tyrosine 143. The active site involves lysine 147.

In terms of assembly, monomer. Forms homodimers during oxidative stress. Interacts (via N-terminus) with elongation factor EEF1A1 (via middle-region); the interaction is direct and competes with EEF1A1 binding to guanyl-nucleotide exchange factor EEF1B2, thereby inhibiting GDP for GTP exchange and reactivation of EEF1A1. Interacts with nuclear transport receptors XPO4, IPO5/RANBP5, IPO7, IPO9 and KPNB1 as well as GCN1L1/GCN1 and LRPPRC probably through their HEAT repeats. Binds NCOA5/CIA. As to quaternary structure, interacts (via N-terminus) with proteasome subunit PSMD4/s5a. (Microbial infection) Interacts with HIV-1 Tat (via activation domain). High levels in liver, lung, skeletal muscle, pancreas and placenta. Moderate levels in heart and kidney. Low levels in brain. Not expressed or low levels in variant small cell lung carcinomas, 33% of hepatocellular carcinomas and neuroblastomas. Levels are reduced in the heart of patients with hypertrophic cardiomyopathy and failing hearts.

It localises to the cytoplasm. Its function is as follows. Represses translation by preventing reactivation of elongation factor eEF1A. May also inhibit nuclear import by competing with nuclear import substrates for binding to a subset of nuclear transport receptors. Has additionally been proposed to act as a redox sensor involved in cellular oxidative stress surveillance. The sequence is that of Protein HTATIP2 from Homo sapiens (Human).